A 343-amino-acid polypeptide reads, in one-letter code: MDKKDNIILAFESSCDETSVAVVKNGNEILSNIVATQVASHQRFGGVVPEVASRHHIEQITYCIQDALDEANVDYEDLDAVAVTYGPGLVGALLVGVAAAKAIAFAHNLPLIPVNHMAGHIYAARFIGEIKFPALALLVSGGHTELVYMPEENKFQIIGETRDDAAGEAFDKVGRVMGMKYPSGKEIDELAKTGKDTFNFPRAMEKEDNFDFSFSGLKSAFINTVHHASQIGEKLDKADLATSFEQSVVDVLSSKTVKALGHFKVKQLILAGGVAANQGLRTRLDKELTAFKDVELLKAPLKLCGDNAAMIGAAGYVAFKHGVRADMTLNAEPSLEFEWMVEK.

Residues histidine 116 and histidine 120 each contribute to the Fe cation site. Residues 138–142, aspartate 171, glycine 184, aspartate 188, and asparagine 277 contribute to the substrate site; that span reads LVSGG. Aspartate 306 is a binding site for Fe cation.

It belongs to the KAE1 / TsaD family. It depends on Fe(2+) as a cofactor.

It is found in the cytoplasm. The catalysed reaction is L-threonylcarbamoyladenylate + adenosine(37) in tRNA = N(6)-L-threonylcarbamoyladenosine(37) in tRNA + AMP + H(+). Required for the formation of a threonylcarbamoyl group on adenosine at position 37 (t(6)A37) in tRNAs that read codons beginning with adenine. Is involved in the transfer of the threonylcarbamoyl moiety of threonylcarbamoyl-AMP (TC-AMP) to the N6 group of A37, together with TsaE and TsaB. TsaD likely plays a direct catalytic role in this reaction. This Ligilactobacillus salivarius (strain UCC118) (Lactobacillus salivarius) protein is tRNA N6-adenosine threonylcarbamoyltransferase.